The primary structure comprises 290 residues: Enoyl-CoA hydratase, mitochondrial (290 aa).

A mitochondrion-targeting transit peptide spans 1–27 (MATLRVLLSCVRGPLRPPVRCPAWRPF). Thr46 carries the post-translational modification Phosphothreonine. Position 98-101 (98-101 (ADIK)) interacts with substrate. Lys101 is modified (N6-acetyllysine; alternate). Lys101 bears the N6-succinyllysine; alternate mark. Phosphoserine is present on Ser114. Residue Lys115 is modified to N6-acetyllysine; alternate. Lys115 is subject to N6-succinyllysine; alternate. N6-acetyllysine is present on Lys118. Gly141 is a substrate binding site. Lys204 is subject to N6-succinyllysine. Residue Lys211 is modified to N6-acetyllysine.

It belongs to the enoyl-CoA hydratase/isomerase family. Homohexamer; dimer of trimers.

It is found in the mitochondrion matrix. It catalyses the reaction a (3S)-3-hydroxyacyl-CoA = a (2E)-enoyl-CoA + H2O. The enzyme catalyses a (3E)-enoyl-CoA = a 4-saturated (2E)-enoyl-CoA. The catalysed reaction is (3E)-hexenoyl-CoA = (2E)-hexenoyl-CoA. It carries out the reaction (3S)-3-hydroxybutanoyl-CoA = (2E)-butenoyl-CoA + H2O. It catalyses the reaction 3-hydroxyisovaleryl-CoA = 3-methylbut-2-enoyl-CoA + H2O. The enzyme catalyses 3-hydroxypropanoyl-CoA = acryloyl-CoA + H2O. The catalysed reaction is 3-hydroxybutanoyl-CoA = (2E)-butenoyl-CoA + H2O. It carries out the reaction 2-methylpropenoyl-CoA + H2O = (S)-3-hydroxyisobutanoyl-CoA. It catalyses the reaction (3S)-hydroxyhexanoyl-CoA = (2E)-hexenoyl-CoA + H2O. The enzyme catalyses (3S)-hydroxydecanoyl-CoA = (2E)-decenoyl-CoA + H2O. The protein operates within lipid metabolism; fatty acid beta-oxidation. In terms of biological role, converts unsaturated trans-2-enoyl-CoA species ((2E)-enoyl-CoA) to the corresponding (3S)-3-hydroxyacyl-CoA species through addition of a water molecule to the double bond. Catalyzes the hydration of medium- and short-chained fatty enoyl-CoA thioesters from 4 carbons long (C4) up to C16. Has high substrate specificity for crotonyl-CoA ((2E)-butenoyl-CoA) and moderate specificity for acryloyl-CoA, 3-methylcrotonyl-CoA (3-methyl-(2E)-butenoyl-CoA) and methacrylyl-CoA ((2E)-2-methylpropenoyl-CoA). Can bind tiglyl-CoA (2-methylcrotonoyl-CoA), but hydrates only a small amount of this substrate. Plays a key role in the beta-oxidation spiral of short- and medium-chain fatty acid oxidation. At a lower rate than the hydratase reaction, catalyzes the isomerase reaction of trans-3-enoyl-CoA species (such as (3E)-hexenoyl-CoA) to trans-2-enoyl-CoA species (such as (2E)-hexenoyl-CoA), which are subsequently hydrated to 3(S)-3-hydroxyacyl-CoA species (such as (3S)-hydroxyhexanoyl-CoA). In Pongo abelii (Sumatran orangutan), this protein is Enoyl-CoA hydratase, mitochondrial (ECHS1).